We begin with the raw amino-acid sequence, 333 residues long: Cap-specific mRNA (nucleoside-2'-O-)-methyltransferase (333 aa).

Tyr-22 provides a ligand contact to mRNA. Residues Gln-39, Tyr-66, Gly-68, Gly-72, Asp-95, Arg-97, Val-116, and Asp-138 each contribute to the S-adenosyl-L-methionine site. A binding to NPH-I region spans residues 169 to 249; sequence PVASSLKWRC…NKIVRNKVVV (81 aa). The tract at residues 169–333 is binding to Rap94; that stretch reads PVASSLKWRC…NSKRSVRSNK (165 aa). Lys-175 serves as the catalytic For methyltransferase activity. MRNA contacts are provided by residues 177–180, Asp-182, 205–207, and Glu-233; these read RCPF and SAE. A disordered region spans residues 305–333; sequence SHEPIQRKISSKNSMSKNRNSKRSVRSNK. Residues 311–322 are compositionally biased toward low complexity; it reads RKISSKNSMSKN. Positions 323–333 are enriched in basic residues; that stretch reads RNSKRSVRSNK.

This sequence belongs to the class I-like SAM-binding methyltransferase superfamily. Poxvirus/kinetoplastid 2'-O-MTase family. As to quaternary structure, interacts with poly(A) polymerase catalytic subunit OPG063. Interacts with OPG109 and OPG123; these interactions might help linking transcription to capping and polyadenylation.

The protein resides in the virion. The catalysed reaction is a 5'-end (N(7)-methyl 5'-triphosphoguanosine)-ribonucleoside in mRNA + S-adenosyl-L-methionine = a 5'-end (N(7)-methyl 5'-triphosphoguanosine)-(2'-O-methyl-ribonucleoside) in mRNA + S-adenosyl-L-homocysteine + H(+). Its function is as follows. Displays methyltransferase, positive regulation of the poly(A) polymerase and transcription elongation activities. Involved in the modification of both mRNA ends and in intermediate and late gene positive transcription elongation. At the mRNAs 5' end, methylates the ribose 2' OH group of the first transcribed nucleotide, thereby producing a 2'-O-methylpurine cap. At the 3' end, functions as a processivity factor which stimulates the activity of the viral poly(A) polymerase OPG063 that creates mRNA's poly(A) tail. In the presence of OPG102, OPG063 does not dissociate from the RNA allowing tail elongation to around 250 adenylates. In Vaccinia virus (strain Western Reserve) (VACV), this protein is Cap-specific mRNA (nucleoside-2'-O-)-methyltransferase (OPG102).